We begin with the raw amino-acid sequence, 241 residues long: Ribose-5-phosphate isomerase A (241 aa).

Residues 29–32 (TGTT), 84–87 (DGAD), and 97–100 (KGGG) contribute to the substrate site. Glutamate 106 functions as the Proton acceptor in the catalytic mechanism. Position 124 (lysine 124) interacts with substrate.

The protein belongs to the ribose 5-phosphate isomerase family. In terms of assembly, homodimer.

It catalyses the reaction aldehydo-D-ribose 5-phosphate = D-ribulose 5-phosphate. It functions in the pathway carbohydrate degradation; pentose phosphate pathway; D-ribose 5-phosphate from D-ribulose 5-phosphate (non-oxidative stage): step 1/1. Catalyzes the reversible conversion of ribose-5-phosphate to ribulose 5-phosphate. This chain is Ribose-5-phosphate isomerase A, found in Thermoplasma acidophilum (strain ATCC 25905 / DSM 1728 / JCM 9062 / NBRC 15155 / AMRC-C165).